Here is a 230-residue protein sequence, read N- to C-terminus: Endonuclease NucS (230 aa).

It belongs to the NucS endonuclease family.

The protein localises to the cytoplasm. Its function is as follows. Cleaves both 3' and 5' ssDNA extremities of branched DNA structures. The protein is Endonuclease NucS of Corynebacterium aurimucosum (strain ATCC 700975 / DSM 44827 / CIP 107346 / CN-1) (Corynebacterium nigricans).